The sequence spans 511 residues: 2,3-bisphosphoglycerate-independent phosphoglycerate mutase (511 aa).

Residue aspartate 12 participates in Mn(2+) binding. Residue tyrosine 36 is modified to Phosphotyrosine. Mn(2+) is bound at residue serine 62. The active-site Phosphoserine intermediate is serine 62. Substrate is bound by residues histidine 123, 153 to 154, arginine 185, arginine 191, 261 to 264, and lysine 336; these read RD and RPDR. Mn(2+) contacts are provided by aspartate 403, histidine 407, aspartate 444, histidine 445, and histidine 462.

Belongs to the BPG-independent phosphoglycerate mutase family. As to quaternary structure, monomer. Requires Mn(2+) as cofactor.

It carries out the reaction (2R)-2-phosphoglycerate = (2R)-3-phosphoglycerate. Its pathway is carbohydrate degradation; glycolysis; pyruvate from D-glyceraldehyde 3-phosphate: step 3/5. Functionally, catalyzes the interconversion of 2-phosphoglycerate and 3-phosphoglycerate. The polypeptide is 2,3-bisphosphoglycerate-independent phosphoglycerate mutase (Geobacillus kaustophilus (strain HTA426)).